The sequence spans 159 residues: Troponin C, skeletal muscle (159 aa).

Thr-1 carries the N-acetylthreonine modification. 4 EF-hand domains span residues 14-49 (EMIAEFKAAFDMFDADGGGDISVKELGTVMRMLGQT), 50-85 (PTKEELDAIIEEVDEDGSGTIDFEEFLVMMVRQMKE), 90-125 (KSEEELAECFRIFDRNMDGYIDAEELAEIFRASGEH), and 126-159 (VTDEEIESIMKDGDKNNDGRIDFDEFLKMMEGVQ). Positions 27, 29, 33, 38, 63, 65, 67, 69, 74, 103, 105, 107, 109, 114, 139, 141, 143, 145, and 150 each coordinate Ca(2+).

The protein belongs to the troponin C family.

Troponin is the central regulatory protein of striated muscle contraction. Tn consists of three components: Tn-I which is the inhibitor of actomyosin ATPase, Tn-T which contains the binding site for tropomyosin and Tn-C. The binding of calcium to Tn-C abolishes the inhibitory action of Tn on actin filaments. The sequence is that of Troponin C, skeletal muscle (TNNC2) from Sus scrofa (Pig).